A 333-amino-acid polypeptide reads, in one-letter code: Adenosine deaminase (333 aa).

Residues His12 and His14 each coordinate Zn(2+). Positions 14, 16, and 170 each coordinate substrate. Residue His197 participates in Zn(2+) binding. The active-site Proton donor is Glu200. Asp278 contacts Zn(2+). Position 279 (Asp279) interacts with substrate.

It belongs to the metallo-dependent hydrolases superfamily. Adenosine and AMP deaminases family. Adenosine deaminase subfamily. Requires Zn(2+) as cofactor.

It carries out the reaction adenosine + H2O + H(+) = inosine + NH4(+). It catalyses the reaction 2'-deoxyadenosine + H2O + H(+) = 2'-deoxyinosine + NH4(+). Its function is as follows. Catalyzes the hydrolytic deamination of adenosine and 2-deoxyadenosine. In Salmonella gallinarum (strain 287/91 / NCTC 13346), this protein is Adenosine deaminase.